The chain runs to 498 residues: Probable FAD-binding monooxygenase AlmA (498 aa).

Residues 4–24 traverse the membrane as a helical segment; sequence HIDILIVGAGISGIGIAAHLS. FAD is bound by residues S15, E36, D56, F62, and V104. 54-56 provides a ligand contact to NADP(+); sequence RSD. Residues 184 to 190, 208 to 209, and 292 to 293 each bind NADP(+); these read SGATAIT, RS, and RL. V395 provides a ligand contact to FAD.

The protein belongs to the FAD-binding monooxygenase family. The cofactor is FAD.

The protein resides in the cell membrane. It functions in the pathway hydrocarbon metabolism; alkane degradation. Its function is as follows. Is able to catalyze the degradation of n-alkanes with C chain lengths of 32 and 36. Probably allows Acinetobacter baylyi strain ADP1 to grow on the long-chain n-alkane dotriacontane (C32H66) as a sole carbon source. In Acinetobacter baylyi (strain ATCC 33305 / BD413 / ADP1), this protein is Probable FAD-binding monooxygenase AlmA.